Here is a 223-residue protein sequence, read N- to C-terminus: Cell division protein SepF (223 aa).

The disordered stretch occupies residues 19 to 81 (YDDEYYDDRG…YPPPGGYRGG (63 aa)). Residues 36–69 (PRFEDDYGRYEGRDFEDPRRDPRAGMRADLRGEP) are compositionally biased toward basic and acidic residues.

It belongs to the SepF family. In terms of assembly, homodimer. Interacts with FtsZ.

Its subcellular location is the cytoplasm. Its function is as follows. Cell division protein that is part of the divisome complex and is recruited early to the Z-ring. Probably stimulates Z-ring formation, perhaps through the cross-linking of FtsZ protofilaments. Its function overlaps with FtsA. This is Cell division protein SepF from Mycobacterium ulcerans (strain Agy99).